The chain runs to 788 residues: Xylulose-5-phosphate phosphoketolase (788 aa).

Belongs to the XFP family. As to quaternary structure, homohexamer. Requires thiamine diphosphate as cofactor.

The catalysed reaction is D-xylulose 5-phosphate + phosphate = acetyl phosphate + D-glyceraldehyde 3-phosphate + H2O. The chain is Xylulose-5-phosphate phosphoketolase (xpkA) from Lactiplantibacillus pentosus (Lactobacillus pentosus).